The following is a 343-amino-acid chain: Farnesyl pyrophosphate synthase (343 aa).

3 residues coordinate isopentenyl diphosphate: Lys-49, Arg-52, and Gln-87. The Mg(2+) site is built by Asp-94 and Asp-98. Arg-103 is a binding site for dimethylallyl diphosphate. Arg-104 lines the isopentenyl diphosphate pocket. Dimethylallyl diphosphate is bound by residues Lys-191, Thr-192, Gln-230, Lys-247, and Lys-256.

The protein belongs to the FPP/GGPP synthase family. Requires Mg(2+) as cofactor. As to expression, expressed both in apical and sub-apical cells of glandular secretory trichomes.

The protein localises to the cytoplasm. Its subcellular location is the nucleus. It catalyses the reaction isopentenyl diphosphate + dimethylallyl diphosphate = (2E)-geranyl diphosphate + diphosphate. The enzyme catalyses isopentenyl diphosphate + (2E)-geranyl diphosphate = (2E,6E)-farnesyl diphosphate + diphosphate. It functions in the pathway isoprenoid biosynthesis; farnesyl diphosphate biosynthesis; farnesyl diphosphate from geranyl diphosphate and isopentenyl diphosphate: step 1/1. It participates in sesquiterpene biosynthesis. Its pathway is isoprenoid biosynthesis; geranyl diphosphate biosynthesis; geranyl diphosphate from dimethylallyl diphosphate and isopentenyl diphosphate: step 1/1. Involved in the biosynthesis of the antimalarial endoperoxide artemisinin. Catalyzes the sequential condensation of isopentenyl pyrophosphate with the allylic pyrophosphates, dimethylallyl pyrophosphate, and then with the resultant geranylpyrophosphate to the ultimate product farnesyl pyrophosphate. Promotes anti-malarial and antimicrobial (toward Gram-positive bacteria B.subtilis and S.aureus) activities of plant crude extract probably by triggering artemisinin levels. This chain is Farnesyl pyrophosphate synthase, found in Artemisia annua (Sweet wormwood).